Reading from the N-terminus, the 1157-residue chain is ATP-dependent helicase/deoxyribonuclease subunit B (1157 aa).

A UvrD-like helicase ATP-binding domain is found at 1–278 (MTLQIIAGRS…FFLENKRAKT (278 aa)). 8-15 (GRSGTGKT) provides a ligand contact to ATP. The UvrD-like helicase C-terminal domain occupies 272–590 (ENKRAKTESL…VLSDMENAKL (319 aa)). Residues Cys794, Cys1115, Cys1118, and Cys1124 each contribute to the [4Fe-4S] cluster site.

Belongs to the helicase family. AddB/RexB type 1 subfamily. In terms of assembly, heterodimer of AddA and AddB. Requires Mg(2+) as cofactor. The cofactor is [4Fe-4S] cluster.

Functionally, the heterodimer acts as both an ATP-dependent DNA helicase and an ATP-dependent, dual-direction single-stranded exonuclease. Recognizes the chi site generating a DNA molecule suitable for the initiation of homologous recombination. The AddB subunit has 5' -&gt; 3' nuclease activity but not helicase activity. The sequence is that of ATP-dependent helicase/deoxyribonuclease subunit B from Listeria monocytogenes serotype 4a (strain HCC23).